We begin with the raw amino-acid sequence, 298 residues long: Tyrosine recombinase XerD (298 aa).

The region spanning Ala-3 to Leu-88 is the Core-binding (CB) domain. Residues Pro-109–Ala-292 form the Tyr recombinase domain. Catalysis depends on residues Arg-149, Lys-173, His-244, Arg-247, and His-270. The O-(3'-phospho-DNA)-tyrosine intermediate role is filled by Tyr-279.

Belongs to the 'phage' integrase family. XerD subfamily. In terms of assembly, forms a cyclic heterotetrameric complex composed of two molecules of XerC and two molecules of XerD.

It localises to the cytoplasm. Functionally, site-specific tyrosine recombinase, which acts by catalyzing the cutting and rejoining of the recombining DNA molecules. The XerC-XerD complex is essential to convert dimers of the bacterial chromosome into monomers to permit their segregation at cell division. It also contributes to the segregational stability of plasmids. The chain is Tyrosine recombinase XerD from Pseudomonas putida (strain ATCC 47054 / DSM 6125 / CFBP 8728 / NCIMB 11950 / KT2440).